The following is a 352-amino-acid chain: MEFQKFRTMHFPRDVYIGHDVLEHIVDVVGENSRNKNAIIVSGDLTYELAGRKVHDLLSTYGYEVHVFLAGNANYDTLERIEYESLDIQAGIVIGVGGGAKIDLAKKLAFDRKLPFVSVPTAPSHDGIASPRASLRRNGISYSEEGAMPIGVIADTAIMIKAPYRYLAAGAADVISNLSAVKDWKLAHRLKGEEFSSSAAAMSEYSAQEVLSQINEIKKYEESSVWLVTKNILASGTAMAIAGNSRPGSGSEHLFAHALEAAGVENMLHGEMCAMGTVISMYLHDENWQQIKEAFDNLGISIRSRDYGIEDEIVINALRTAHAIRPERYTILGESDMSYDAAVKALELTGII.

Residues 99-103 (GAKID) and 121-124 (TAPS) contribute to the NAD(+) site. Asp-126 serves as a coordination point for substrate. Ser-130 serves as a coordination point for NAD(+). Asp-173 contributes to the substrate binding site. The Zn(2+) site is built by Asp-173 and His-253. Substrate is bound at residue His-257. Residue His-269 participates in Zn(2+) binding.

Belongs to the glycerol-1-phosphate dehydrogenase family. The cofactor is Zn(2+).

The protein localises to the cytoplasm. It carries out the reaction sn-glycerol 1-phosphate + NAD(+) = dihydroxyacetone phosphate + NADH + H(+). The enzyme catalyses sn-glycerol 1-phosphate + NADP(+) = dihydroxyacetone phosphate + NADPH + H(+). The protein operates within membrane lipid metabolism; glycerophospholipid metabolism. Catalyzes the NAD(P)H-dependent reduction of dihydroxyacetonephosphate (DHAP or glycerone phosphate) to glycerol 1-phosphate (G1P). The G1P thus generated is used as the glycerophosphate backbone of phospholipids in the cellular membranes of Archaea. This Thermoplasma acidophilum (strain ATCC 25905 / DSM 1728 / JCM 9062 / NBRC 15155 / AMRC-C165) protein is Glycerol-1-phosphate dehydrogenase [NAD(P)+].